A 247-amino-acid polypeptide reads, in one-letter code: 3-deoxy-manno-octulosonate cytidylyltransferase (247 aa).

The protein belongs to the KdsB family.

It is found in the cytoplasm. It catalyses the reaction 3-deoxy-alpha-D-manno-oct-2-ulosonate + CTP = CMP-3-deoxy-beta-D-manno-octulosonate + diphosphate. The protein operates within nucleotide-sugar biosynthesis; CMP-3-deoxy-D-manno-octulosonate biosynthesis; CMP-3-deoxy-D-manno-octulosonate from 3-deoxy-D-manno-octulosonate and CTP: step 1/1. Its pathway is bacterial outer membrane biogenesis; lipopolysaccharide biosynthesis. In terms of biological role, activates KDO (a required 8-carbon sugar) for incorporation into bacterial lipopolysaccharide in Gram-negative bacteria. The protein is 3-deoxy-manno-octulosonate cytidylyltransferase of Methylorubrum extorquens (strain PA1) (Methylobacterium extorquens).